The primary structure comprises 494 residues: MEKKLKSWQGWLLFGGTMVVVFVLGMIAASVNERHAEVTSVMNNKKTEITGIEARNDKFESNYPREYQTWEATADTSFKSLYNGNQAVDVLEARPEMVILWAGYAFSKDYSTPRGHMHAIEDMRNTLRVGAPMTENEGPQPATCWTCKSPDVPRMMQAMGVDNFYKGKWASLGKEIVNPIGCADCHEPENMNLHISRPALIEAFQRQGKDITKATQQEMRSLVCAQCHVEYYFKGDGKYLTFPWDKGSTVEDMEAYYDEAGFADYTHKLSRAPILKAQHPDYEISQMGIHAQRGVSCADCHMPYKSEGGVKYSDHHIQSPLAMIDRTCQVCHRESEETLRNNVYERQNKANEMRNRLETELAKAHVEAKFAWDKGATEDQMKDVLKLIRQAQWRWDFGVASHGGAFHAPQEIQRILGNGLDKAMQARLATAKVLAKLGYTDDVPMPDFSTKEKAQQYIGLDMAAERTAKEKFLNTIVPQWMKEAQENNRLAKNI.

The first 31 residues, 1–31 (MEKKLKSWQGWLLFGGTMVVVFVLGMIAASV), serve as a signal peptide directing secretion. Histidine 116 contributes to the heme c binding site. Residues cysteine 144, cysteine 147, and lysine 148 each coordinate heme. Heme c contacts are provided by cysteine 182, cysteine 185, histidine 186, cysteine 224, cysteine 227, and histidine 228. Ca(2+)-binding residues include glutamate 230, tyrosine 231, lysine 276, and glutamine 278. Tyrosine 231 is a binding site for substrate. Residue histidine 279 coordinates substrate. Histidine 290, cysteine 297, cysteine 300, histidine 301, histidine 315, cysteine 328, cysteine 331, histidine 332, and histidine 407 together coordinate heme c.

The protein belongs to the cytochrome c-552 family. The cofactor is Ca(2+). Heme c is required as a cofactor.

The protein resides in the periplasm. It carries out the reaction 6 Fe(III)-[cytochrome c] + NH4(+) + 2 H2O = 6 Fe(II)-[cytochrome c] + nitrite + 8 H(+). It functions in the pathway nitrogen metabolism; nitrate reduction (assimilation). Functionally, catalyzes the reduction of nitrite to ammonia, consuming six electrons in the process. The polypeptide is Cytochrome c-552 (Parabacteroides distasonis (strain ATCC 8503 / DSM 20701 / CIP 104284 / JCM 5825 / NCTC 11152)).